The chain runs to 595 residues: 3-hydroxy-3-methylglutaryl-coenzyme A reductase 2 (595 aa).

N35 is a glycosylation site (N-linked (GlcNAc...) asparagine). Helical transmembrane passes span 48-68 and 92-112; these read LPLY…MYFL and AIVS…IGFV. Residues 113–183 form a linker region; that stretch reads QTFVSRGNND…SPLITPASSE (71 aa). N121 carries N-linked (GlcNAc...) asparagine glycosylation. Residues 184-595 form a catalytic region; it reads EDEEIINSVV…KYNRSTKASS (412 aa). The active-site Charge relay system is E278. An N-linked (GlcNAc...) asparagine glycan is attached at N342. K410 (charge relay system) is an active-site residue. N-linked (GlcNAc...) asparagine glycosylation is present at N455. D486 functions as the Charge relay system in the catalytic mechanism. Catalysis depends on H584, which acts as the Proton donor. An N-linked (GlcNAc...) asparagine glycan is attached at N588.

It belongs to the HMG-CoA reductase family. As to expression, expressed in young flowers and in mature sepals and ovaries.

The protein resides in the endoplasmic reticulum membrane. It carries out the reaction (R)-mevalonate + 2 NADP(+) + CoA = (3S)-3-hydroxy-3-methylglutaryl-CoA + 2 NADPH + 2 H(+). The protein operates within metabolic intermediate biosynthesis; (R)-mevalonate biosynthesis; (R)-mevalonate from acetyl-CoA: step 3/3. Functionally, catalyzes the synthesis of mevalonate. The specific precursor of all isoprenoid compounds present in plants. The chain is 3-hydroxy-3-methylglutaryl-coenzyme A reductase 2 (HMG2) from Solanum tuberosum (Potato).